Consider the following 287-residue polypeptide: Nucleotide-binding protein TGRD_433 (287 aa).

Gly-9 to Ser-16 contacts ATP. Asp-60–Ala-63 is a binding site for GTP.

It belongs to the RapZ-like family.

In terms of biological role, displays ATPase and GTPase activities. In Endomicrobium trichonymphae, this protein is Nucleotide-binding protein TGRD_433.